The following is a 719-amino-acid chain: MHRNLGDKDLNLPQYYNNRELSWLDFNYRVLQEAQDKNNPLLEQLNFISIFSSNLDEFFMVRVAGLQDQVKMGYDKPENKAQLTPKQQLVQIKLKNKEIVDLQYKRYNELIDDLKQYQVEIIKPEQLPDDLLPQLESEFKYGILPTLTPLGIDAYHPFPKLNNKSLNIFVDIDTEDDINSAIVQIPSLISRFYSFNKGDKQYIILIEDIITYFINDLFSGYTVLNTFTFRITRNADLTIHEDGAEDLLIEIERFLKERKRGTAVRLEVDGRQATHEDIVWIINQLDVHDNDVYFVDGPLDLTMLTDLVDHLSNKLKYLKYNKYVPQIPQSLGNHNIFDLSLKRDIFFHHPYESFEPIVDFIREAAEDPNTIAIKQTLYRVSKDSPIINSLKNAAENGKQVTVLVELKARFDEENNVHWARMLEEAGCHVIYGMTHLKTHSKIALVVKRMNNKLTSFIHLGTGNYNDKTANIYTDMGLITTNAEIAEDAINFFNYLSGYSVKPEYNKLIVAPFDIRDVFLARIDNEIKSHRENGNGKIIMKMNSLTDKDIILKLFEASCAGVKVQLIIRGICCLKPGVPGISENIEVVSIVGRFLEHSRIYHFHNNGDDIIYLSSADAMTRNMIKRVEILFPVEDKNIAKRLLDYMNLQLSDNQKGRYQDELGQYHYIENNLSPLNSQAFLMKEAMDYGQQLKEDNTRPQVMSVNERKGWFTKIRKQFRK.

Residue Asn-54 participates in ATP binding. Residues Arg-379 and Arg-409 each coordinate Mg(2+). Residues Thr-434–Thr-468 enclose the PLD phosphodiesterase domain. The Phosphohistidine intermediate role is filled by His-439. Residues Tyr-472, Arg-568, and His-596 each coordinate ATP.

Belongs to the polyphosphate kinase 1 (PPK1) family. Mg(2+) is required as a cofactor. An intermediate of this reaction is the autophosphorylated ppk in which a phosphate is covalently linked to a histidine residue through a N-P bond.

It carries out the reaction [phosphate](n) + ATP = [phosphate](n+1) + ADP. In terms of biological role, catalyzes the reversible transfer of the terminal phosphate of ATP to form a long-chain polyphosphate (polyP). In Staphylococcus saprophyticus subsp. saprophyticus (strain ATCC 15305 / DSM 20229 / NCIMB 8711 / NCTC 7292 / S-41), this protein is Polyphosphate kinase.